The following is a 413-amino-acid chain: Arginine biosynthesis bifunctional protein ArgJ, mitochondrial (413 aa).

Substrate is bound by residues Thr-168, Lys-194, Thr-205, and Glu-292. Thr-205 serves as the catalytic Nucleophile.

It belongs to the ArgJ family. As to quaternary structure, heterodimer of an alpha and a beta chain. The alpha and beta chains are autoproteolytically processed from a single precursor protein within the mitochondrion.

It is found in the mitochondrion matrix. It catalyses the reaction N(2)-acetyl-L-ornithine + L-glutamate = N-acetyl-L-glutamate + L-ornithine. The catalysed reaction is L-glutamate + acetyl-CoA = N-acetyl-L-glutamate + CoA + H(+). It functions in the pathway amino-acid biosynthesis; L-arginine biosynthesis; L-ornithine and N-acetyl-L-glutamate from L-glutamate and N(2)-acetyl-L-ornithine (cyclic): step 1/1. The protein operates within amino-acid biosynthesis; L-arginine biosynthesis; N(2)-acetyl-L-ornithine from L-glutamate: step 1/4. Catalyzes two activities which are involved in the cyclic version of arginine biosynthesis: the synthesis of acetylglutamate from glutamate and acetyl-CoA, and of ornithine by transacetylation between acetylornithine and glutamate. In Clavispora lusitaniae (strain ATCC 42720) (Yeast), this protein is Arginine biosynthesis bifunctional protein ArgJ, mitochondrial.